A 567-amino-acid chain; its full sequence is Proline--tRNA ligase (567 aa).

This sequence belongs to the class-II aminoacyl-tRNA synthetase family. ProS type 1 subfamily. As to quaternary structure, homodimer.

It localises to the cytoplasm. The catalysed reaction is tRNA(Pro) + L-proline + ATP = L-prolyl-tRNA(Pro) + AMP + diphosphate. In terms of biological role, catalyzes the attachment of proline to tRNA(Pro) in a two-step reaction: proline is first activated by ATP to form Pro-AMP and then transferred to the acceptor end of tRNA(Pro). As ProRS can inadvertently accommodate and process non-cognate amino acids such as alanine and cysteine, to avoid such errors it has two additional distinct editing activities against alanine. One activity is designated as 'pretransfer' editing and involves the tRNA(Pro)-independent hydrolysis of activated Ala-AMP. The other activity is designated 'posttransfer' editing and involves deacylation of mischarged Ala-tRNA(Pro). The misacylated Cys-tRNA(Pro) is not edited by ProRS. The sequence is that of Proline--tRNA ligase from Campylobacter curvus (strain 525.92).